A 602-amino-acid chain; its full sequence is UvrABC system protein C (602 aa).

The 78-residue stretch at 17 to 94 (TTSGCYKMYS…IKEYKPDYNI (78 aa)) folds into the GIY-YIG domain. The UVR domain occupies 199–234 (SKLLDETEIKMKEAIKKEDFEAAIKLKETKRSLIEI).

It belongs to the UvrC family. As to quaternary structure, interacts with UvrB in an incision complex.

The protein resides in the cytoplasm. In terms of biological role, the UvrABC repair system catalyzes the recognition and processing of DNA lesions. UvrC both incises the 5' and 3' sides of the lesion. The N-terminal half is responsible for the 3' incision and the C-terminal half is responsible for the 5' incision. In Borrelia hermsii (strain HS1 / DAH), this protein is UvrABC system protein C.